Consider the following 590-residue polypeptide: Aspartate--tRNA(Asp/Asn) ligase (590 aa).

Glutamate 175 provides a ligand contact to L-aspartate. The segment at 199–202 is aspartate; sequence QQYK. L-aspartate is bound by residues arginine 221 and histidine 450. 221 to 223 provides a ligand contact to ATP; sequence RDE. Glutamate 484 provides a ligand contact to ATP. Arginine 491 is an L-aspartate binding site. 536 to 539 lines the ATP pocket; that stretch reads GVDR.

It belongs to the class-II aminoacyl-tRNA synthetase family. Type 1 subfamily. Homodimer.

It localises to the cytoplasm. The catalysed reaction is tRNA(Asx) + L-aspartate + ATP = L-aspartyl-tRNA(Asx) + AMP + diphosphate. Aspartyl-tRNA synthetase with relaxed tRNA specificity since it is able to aspartylate not only its cognate tRNA(Asp) but also tRNA(Asn). Reaction proceeds in two steps: L-aspartate is first activated by ATP to form Asp-AMP and then transferred to the acceptor end of tRNA(Asp/Asn). In Bradyrhizobium diazoefficiens (strain JCM 10833 / BCRC 13528 / IAM 13628 / NBRC 14792 / USDA 110), this protein is Aspartate--tRNA(Asp/Asn) ligase.